The following is a 395-amino-acid chain: Phosphopentomutase (395 aa).

Residues aspartate 12, aspartate 289, histidine 294, aspartate 330, histidine 331, and histidine 342 each contribute to the Mn(2+) site.

The protein belongs to the phosphopentomutase family. Mn(2+) is required as a cofactor.

The protein resides in the cytoplasm. It catalyses the reaction 2-deoxy-alpha-D-ribose 1-phosphate = 2-deoxy-D-ribose 5-phosphate. The enzyme catalyses alpha-D-ribose 1-phosphate = D-ribose 5-phosphate. It participates in carbohydrate degradation; 2-deoxy-D-ribose 1-phosphate degradation; D-glyceraldehyde 3-phosphate and acetaldehyde from 2-deoxy-alpha-D-ribose 1-phosphate: step 1/2. Its function is as follows. Isomerase that catalyzes the conversion of deoxy-ribose 1-phosphate (dRib-1-P) and ribose 1-phosphate (Rib-1-P) to deoxy-ribose 5-phosphate (dRib-5-P) and ribose 5-phosphate (Rib-5-P), respectively. The polypeptide is Phosphopentomutase (Levilactobacillus brevis (strain ATCC 367 / BCRC 12310 / CIP 105137 / JCM 1170 / LMG 11437 / NCIMB 947 / NCTC 947) (Lactobacillus brevis)).